Reading from the N-terminus, the 224-residue chain is Lipoprotein-releasing system ATP-binding protein LolD (224 aa).

The ABC transporter domain maps to 4–224 (LSIRNVFKSY…RLAGGEVSEA (221 aa)). An ATP-binding site is contributed by 40 to 47 (GASGAGKS).

The protein belongs to the ABC transporter superfamily. Lipoprotein translocase (TC 3.A.1.125) family. The complex is composed of two ATP-binding proteins (LolD) and two transmembrane proteins (LolC and LolE).

The protein resides in the cell inner membrane. Functionally, part of the ABC transporter complex LolCDE involved in the translocation of mature outer membrane-directed lipoproteins, from the inner membrane to the periplasmic chaperone, LolA. Responsible for the formation of the LolA-lipoprotein complex in an ATP-dependent manner. This chain is Lipoprotein-releasing system ATP-binding protein LolD, found in Myxococcus xanthus (strain DK1622).